A 383-amino-acid polypeptide reads, in one-letter code: Centractin (383 aa).

Positions 227–246 (PQKEEELLEPDSSSSKPVQP) are disordered.

The protein belongs to the actin family. ARP1 subfamily.

The protein localises to the cytoplasm. It localises to the cytoskeleton. The protein resides in the microtubule organizing center. It is found in the centrosome. In terms of biological role, component of a multi-subunit complex, PPK2 (poly P kinase complex 2) involved in microtubule based vesicle motility. It is associated with the centrosome. PPK2 complex can synthesize a poly chain of hundreds of phosphate residues linked by ATP-like bonds. This chain is Centractin (arpA), found in Dictyostelium discoideum (Social amoeba).